The primary structure comprises 281 residues: uncharacterized protein (281 aa).

This is an uncharacterized protein from Methanocaldococcus jannaschii (strain ATCC 43067 / DSM 2661 / JAL-1 / JCM 10045 / NBRC 100440) (Methanococcus jannaschii).